The sequence spans 134 residues: Ribulose bisphosphate carboxylase small subunit (134 aa).

Belongs to the RuBisCO small chain family. Heterohexadecamer of 8 large and 8 small subunits.

RuBisCO catalyzes two reactions: the carboxylation of D-ribulose 1,5-bisphosphate, the primary event in carbon dioxide fixation, as well as the oxidative fragmentation of the pentose substrate. Both reactions occur simultaneously and in competition at the same active site. Although the small subunit is not catalytic it is essential for maximal activity. This chain is Ribulose bisphosphate carboxylase small subunit, found in Bradyrhizobium diazoefficiens (strain JCM 10833 / BCRC 13528 / IAM 13628 / NBRC 14792 / USDA 110).